Consider the following 145-residue polypeptide: D-aminoacyl-tRNA deacylase (145 aa).

A Gly-cisPro motif, important for rejection of L-amino acids motif is present at residues 137 to 138 (GP).

It belongs to the DTD family. In terms of assembly, homodimer.

The protein localises to the cytoplasm. The catalysed reaction is glycyl-tRNA(Ala) + H2O = tRNA(Ala) + glycine + H(+). The enzyme catalyses a D-aminoacyl-tRNA + H2O = a tRNA + a D-alpha-amino acid + H(+). An aminoacyl-tRNA editing enzyme that deacylates mischarged D-aminoacyl-tRNAs. Also deacylates mischarged glycyl-tRNA(Ala), protecting cells against glycine mischarging by AlaRS. Acts via tRNA-based rather than protein-based catalysis; rejects L-amino acids rather than detecting D-amino acids in the active site. By recycling D-aminoacyl-tRNA to D-amino acids and free tRNA molecules, this enzyme counteracts the toxicity associated with the formation of D-aminoacyl-tRNA entities in vivo and helps enforce protein L-homochirality. The sequence is that of D-aminoacyl-tRNA deacylase from Francisella tularensis subsp. holarctica (strain LVS).